A 338-amino-acid polypeptide reads, in one-letter code: Tagatose 1,6-diphosphate aldolase (338 aa).

This sequence belongs to the aldolase LacD family.

The catalysed reaction is D-tagatofuranose 1,6-bisphosphate = D-glyceraldehyde 3-phosphate + dihydroxyacetone phosphate. Its pathway is carbohydrate metabolism; D-tagatose 6-phosphate degradation; D-glyceraldehyde 3-phosphate and glycerone phosphate from D-tagatose 6-phosphate: step 2/2. The polypeptide is Tagatose 1,6-diphosphate aldolase (Listeria monocytogenes serovar 1/2a (strain ATCC BAA-679 / EGD-e)).